The following is a 147-amino-acid chain: UPF0208 membrane protein CGSHiEE_06015 (147 aa).

The next 2 membrane-spanning stretches (helical) occupy residues 38-58 and 67-87; these read FAQK…QIYA and IAIL…YWLG.

This sequence belongs to the UPF0208 family.

Its subcellular location is the cell inner membrane. This is UPF0208 membrane protein CGSHiEE_06015 from Haemophilus influenzae (strain PittEE).